A 143-amino-acid chain; its full sequence is Large-conductance mechanosensitive channel (143 aa).

A run of 2 helical transmembrane segments spans residues F10–S30 and G89–V109.

Belongs to the MscL family. As to quaternary structure, homopentamer.

It is found in the cell inner membrane. Its function is as follows. Channel that opens in response to stretch forces in the membrane lipid bilayer. May participate in the regulation of osmotic pressure changes within the cell. This Burkholderia vietnamiensis (strain G4 / LMG 22486) (Burkholderia cepacia (strain R1808)) protein is Large-conductance mechanosensitive channel.